The sequence spans 187 residues: Crossover junction endodeoxyribonuclease RuvC (187 aa).

Residues D7, E67, and D140 contribute to the active site. Mg(2+) is bound by residues D7, E67, and D140.

Belongs to the RuvC family. As to quaternary structure, homodimer which binds Holliday junction (HJ) DNA. The HJ becomes 2-fold symmetrical on binding to RuvC with unstacked arms; it has a different conformation from HJ DNA in complex with RuvA. In the full resolvosome a probable DNA-RuvA(4)-RuvB(12)-RuvC(2) complex forms which resolves the HJ. Requires Mg(2+) as cofactor.

It localises to the cytoplasm. The enzyme catalyses Endonucleolytic cleavage at a junction such as a reciprocal single-stranded crossover between two homologous DNA duplexes (Holliday junction).. In terms of biological role, the RuvA-RuvB-RuvC complex processes Holliday junction (HJ) DNA during genetic recombination and DNA repair. Endonuclease that resolves HJ intermediates. Cleaves cruciform DNA by making single-stranded nicks across the HJ at symmetrical positions within the homologous arms, yielding a 5'-phosphate and a 3'-hydroxyl group; requires a central core of homology in the junction. The consensus cleavage sequence is 5'-(A/T)TT(C/G)-3'. Cleavage occurs on the 3'-side of the TT dinucleotide at the point of strand exchange. HJ branch migration catalyzed by RuvA-RuvB allows RuvC to scan DNA until it finds its consensus sequence, where it cleaves and resolves the cruciform DNA. The chain is Crossover junction endodeoxyribonuclease RuvC from Chlorobium phaeobacteroides (strain DSM 266 / SMG 266 / 2430).